A 375-amino-acid polypeptide reads, in one-letter code: Succinyl-diaminopimelate desuccinylase (375 aa).

H66 is a Zn(2+) binding site. D68 is a catalytic residue. D99 contacts Zn(2+). E133 acts as the Proton acceptor in catalysis. E134, E162, and H348 together coordinate Zn(2+).

Belongs to the peptidase M20A family. DapE subfamily. In terms of assembly, homodimer. The cofactor is Zn(2+). Requires Co(2+) as cofactor.

It carries out the reaction N-succinyl-(2S,6S)-2,6-diaminopimelate + H2O = (2S,6S)-2,6-diaminopimelate + succinate. The protein operates within amino-acid biosynthesis; L-lysine biosynthesis via DAP pathway; LL-2,6-diaminopimelate from (S)-tetrahydrodipicolinate (succinylase route): step 3/3. Catalyzes the hydrolysis of N-succinyl-L,L-diaminopimelic acid (SDAP), forming succinate and LL-2,6-diaminopimelate (DAP), an intermediate involved in the bacterial biosynthesis of lysine and meso-diaminopimelic acid, an essential component of bacterial cell walls. This chain is Succinyl-diaminopimelate desuccinylase, found in Teredinibacter turnerae (strain ATCC 39867 / T7901).